A 105-amino-acid chain; its full sequence is Large ribosomal subunit protein uL24 (105 aa).

Belongs to the universal ribosomal protein uL24 family. Part of the 50S ribosomal subunit.

One of two assembly initiator proteins, it binds directly to the 5'-end of the 23S rRNA, where it nucleates assembly of the 50S subunit. Functionally, one of the proteins that surrounds the polypeptide exit tunnel on the outside of the subunit. The protein is Large ribosomal subunit protein uL24 of Hahella chejuensis (strain KCTC 2396).